Consider the following 324-residue polypeptide: ATP synthase mitochondrial F1 complex assembly factor 1 (324 aa).

A mitochondrion-targeting transit peptide spans 1 to 54 (MAAVVSAAGGACPAVLQVAGLYRGLCAVRSRALGLGFVSPAQLRVFPVRRGSGL).

This sequence belongs to the ATP11 family. As to quaternary structure, interacts with ATP5F1B; involved in the assembly of the F1 component of the mitochondrial ATP synthase (ATPase). Widely expressed but with low level.

The protein resides in the mitochondrion inner membrane. Its function is as follows. Has a complex stabilizing activity in the assembly of the mitochondrial F1-F0 complex. In Mus musculus (Mouse), this protein is ATP synthase mitochondrial F1 complex assembly factor 1.